The primary structure comprises 420 residues: Pre-mRNA-splicing factor RBM22 (420 aa).

The C3H1-type zinc finger occupies 159–186 (RNRPHICSFWVKGECKRGEECPYRHEKP). Residues 232–305 (TTLYVGGLGD…RRLNVKWGRS (74 aa)) enclose the RRM domain. Disordered stretches follow at residues 303-343 (GRSQ…AAEE) and 372-420 (APPP…HSSP). The span at 309–318 (RGKEKDKEGT) shows a compositional bias: basic and acidic residues.

The protein belongs to the SLT11 family. In terms of assembly, component of the pre-catalytic and catalytic spliceosome complexes. Component of the postcatalytic spliceosome P complex.

Its subcellular location is the nucleus. The protein resides in the cytoplasm. Required for pre-mRNA splicing as component of the activated spliceosome. Involved in the first step of pre-mRNA splicing. Binds directly to the internal stem-loop (ISL) domain of the U6 snRNA and to the pre-mRNA intron near the 5' splice site during the activation and catalytic phases of the spliceosome cycle. This is Pre-mRNA-splicing factor RBM22 (RBM22) from Gallus gallus (Chicken).